The primary structure comprises 198 residues: dTTP/UTP pyrophosphatase (198 aa).

Aspartate 76 serves as the catalytic Proton acceptor.

This sequence belongs to the Maf family. YhdE subfamily. The cofactor is a divalent metal cation.

The protein resides in the cytoplasm. The enzyme catalyses dTTP + H2O = dTMP + diphosphate + H(+). It catalyses the reaction UTP + H2O = UMP + diphosphate + H(+). In terms of biological role, nucleoside triphosphate pyrophosphatase that hydrolyzes dTTP and UTP. May have a dual role in cell division arrest and in preventing the incorporation of modified nucleotides into cellular nucleic acids. In Shewanella denitrificans (strain OS217 / ATCC BAA-1090 / DSM 15013), this protein is dTTP/UTP pyrophosphatase.